Here is a 341-residue protein sequence, read N- to C-terminus: UPF0283 membrane protein HD_1769 (341 aa).

The next 3 membrane-spanning stretches (helical) occupy residues 57 to 77, 86 to 106, and 204 to 224; these read LLAV…QCLI, IDLA…GAII, and ENAI…MIAW.

It belongs to the UPF0283 family.

Its subcellular location is the cell inner membrane. The protein is UPF0283 membrane protein HD_1769 of Haemophilus ducreyi (strain 35000HP / ATCC 700724).